A 785-amino-acid polypeptide reads, in one-letter code: Endonuclease MutS2 (785 aa).

332 to 339 lines the ATP pocket; that stretch reads GPNTGGKT. Residues 710-785 form the Smr domain; that stretch reads VDLRGMDSEE…GNGVTVVELK (76 aa).

The protein belongs to the DNA mismatch repair MutS family. MutS2 subfamily. Homodimer. Binds to stalled ribosomes, contacting rRNA.

Its function is as follows. Endonuclease that is involved in the suppression of homologous recombination and thus may have a key role in the control of bacterial genetic diversity. Acts as a ribosome collision sensor, splitting the ribosome into its 2 subunits. Detects stalled/collided 70S ribosomes which it binds and splits by an ATP-hydrolysis driven conformational change. Acts upstream of the ribosome quality control system (RQC), a ribosome-associated complex that mediates the extraction of incompletely synthesized nascent chains from stalled ribosomes and their subsequent degradation. Probably generates substrates for RQC. This is Endonuclease MutS2 from Clostridium novyi (strain NT).